The following is a 404-amino-acid chain: Cysteine desulfurase IscS (404 aa).

Residues 75 to 76, N155, Q183, and 203 to 205 contribute to the pyridoxal 5'-phosphate site; these read AT and SGH. At K206 the chain carries N6-(pyridoxal phosphate)lysine. T243 lines the pyridoxal 5'-phosphate pocket. The active-site Cysteine persulfide intermediate is C328. C328 provides a ligand contact to [2Fe-2S] cluster.

The protein belongs to the class-V pyridoxal-phosphate-dependent aminotransferase family. NifS/IscS subfamily. Homodimer. Forms a heterotetramer with IscU, interacts with other sulfur acceptors. Pyridoxal 5'-phosphate serves as cofactor.

The protein resides in the cytoplasm. The enzyme catalyses (sulfur carrier)-H + L-cysteine = (sulfur carrier)-SH + L-alanine. It functions in the pathway cofactor biosynthesis; iron-sulfur cluster biosynthesis. Its function is as follows. Master enzyme that delivers sulfur to a number of partners involved in Fe-S cluster assembly, tRNA modification or cofactor biosynthesis. Catalyzes the removal of elemental sulfur atoms from cysteine to produce alanine. Functions as a sulfur delivery protein for Fe-S cluster synthesis onto IscU, an Fe-S scaffold assembly protein, as well as other S acceptor proteins. This Shewanella sp. (strain ANA-3) protein is Cysteine desulfurase IscS.